The sequence spans 287 residues: ATP synthase gamma chain (287 aa).

Belongs to the ATPase gamma chain family. F-type ATPases have 2 components, CF(1) - the catalytic core - and CF(0) - the membrane proton channel. CF(1) has five subunits: alpha(3), beta(3), gamma(1), delta(1), epsilon(1). CF(0) has three main subunits: a, b and c.

It localises to the cell inner membrane. Produces ATP from ADP in the presence of a proton gradient across the membrane. The gamma chain is believed to be important in regulating ATPase activity and the flow of protons through the CF(0) complex. The sequence is that of ATP synthase gamma chain from Xylella fastidiosa (strain M12).